The following is a 177-amino-acid chain: Ureidoglycolate lyase (177 aa).

Belongs to the ureidoglycolate lyase family. As to quaternary structure, homodimer. The cofactor is Ni(2+).

It catalyses the reaction (S)-ureidoglycolate = urea + glyoxylate. It functions in the pathway nitrogen metabolism; (S)-allantoin degradation. Its function is as follows. Catalyzes the catabolism of the allantoin degradation intermediate (S)-ureidoglycolate, generating urea and glyoxylate. Involved in the utilization of allantoin as nitrogen source. The chain is Ureidoglycolate lyase from Burkholderia cepacia (Pseudomonas cepacia).